The sequence spans 256 residues: GDSL esterase/lipase CPRD49 (256 aa).

An N-terminal signal peptide occupies residues 1–27 (MVGPARPQIVLFGSSIVQMSFGHGGWG). The Nucleophile role is filled by Ser-15. Asn-49 and Asn-79 each carry an N-linked (GlcNAc...) asparagine glycan. The active site involves His-213. Asn-243 carries N-linked (GlcNAc...) asparagine glycosylation.

Belongs to the 'GDSL' lipolytic enzyme family. Specifically expressed in anthers (stages 8-12).

It is found in the secreted. This chain is GDSL esterase/lipase CPRD49 (CPRD49), found in Arabidopsis thaliana (Mouse-ear cress).